Here is a 389-residue protein sequence, read N- to C-terminus: MIPGKGRYFFTSESVTEGHPDKVADQISDAVLDVLLAQDPMSRVACETLVTTGMAFIAGEIRTKGFADLPEVVRSTIRNIGYNSSEMGFDWKTCAVISSIDKQSGDIAQGVDRGNPEDQGAGDQGMMFGFACDETPTLMPAPIYWAHQLSQRLTQVRKDGILDFLRPDGKTQVSFEYVDGKPVHINNVVVSSQHADNVSNDTIREGIIEEVIRKTLPEGLMADDCEIFINTTGRFVIGGPMGDCGLTGRKIIQDTYGGAGHHGGGAFSGKDASKVDRSGAYMGRYIAKNVVKAGLAPKCEVQIAYCIGVAEPVSVLVSSLGSSELSDEVLTRAVREVFDLRPYHIIKRLDLNRPIYGKTTCYGHFGRELPEFTWEQCDAVADLRTAAKI.

His19 contacts ATP. Asp21 is a Mg(2+) binding site. Glu47 is a K(+) binding site. L-methionine-binding residues include Glu60 and Gln103. A flexible loop region spans residues 103–113 (QSGDIAQGVDR). Residues 168–170 (DGK), 234–235 (RF), Asp243, 249–250 (RK), Ala266, and Lys270 each bind ATP. Asp243 lines the L-methionine pocket. Lys274 provides a ligand contact to L-methionine.

The protein belongs to the AdoMet synthase family. Homotetramer; dimer of dimers. It depends on Mg(2+) as a cofactor. The cofactor is K(+).

The protein resides in the cytoplasm. The enzyme catalyses L-methionine + ATP + H2O = S-adenosyl-L-methionine + phosphate + diphosphate. It functions in the pathway amino-acid biosynthesis; S-adenosyl-L-methionine biosynthesis; S-adenosyl-L-methionine from L-methionine: step 1/1. In terms of biological role, catalyzes the formation of S-adenosylmethionine (AdoMet) from methionine and ATP. The overall synthetic reaction is composed of two sequential steps, AdoMet formation and the subsequent tripolyphosphate hydrolysis which occurs prior to release of AdoMet from the enzyme. The protein is S-adenosylmethionine synthase of Nitratidesulfovibrio vulgaris (strain DSM 19637 / Miyazaki F) (Desulfovibrio vulgaris).